Reading from the N-terminus, the 102-residue chain is Small ribosomal subunit protein uS10 (102 aa).

This sequence belongs to the universal ribosomal protein uS10 family. Part of the 30S ribosomal subunit.

Functionally, involved in the binding of tRNA to the ribosomes. The polypeptide is Small ribosomal subunit protein uS10 (Nitrosopumilus maritimus (strain SCM1)).